Consider the following 89-residue polypeptide: Small ribosomal subunit protein uS15 (89 aa).

It belongs to the universal ribosomal protein uS15 family. Part of the 30S ribosomal subunit. Forms a bridge to the 50S subunit in the 70S ribosome, contacting the 23S rRNA.

One of the primary rRNA binding proteins, it binds directly to 16S rRNA where it helps nucleate assembly of the platform of the 30S subunit by binding and bridging several RNA helices of the 16S rRNA. Functionally, forms an intersubunit bridge (bridge B4) with the 23S rRNA of the 50S subunit in the ribosome. The chain is Small ribosomal subunit protein uS15 from Erwinia tasmaniensis (strain DSM 17950 / CFBP 7177 / CIP 109463 / NCPPB 4357 / Et1/99).